The sequence spans 186 residues: MKTAQELRVGNVVMIGTDAQVVLKAEYSRSGRNSSVVKMKFKNLLTGAPNEGVYKADDKFDVVILDKKECTYSYFADPMYVFMDGDYNQYEVEAEFMGDALNYLEESMPCEVVFYEGKALSVAMPNSLVREIIYTEPAVKGDTSSGKVLKNAKLATGYELQVPLFCNTGDKIEIDTRTGEYRSRAN.

Belongs to the elongation factor P family.

The protein localises to the cytoplasm. Its pathway is protein biosynthesis; polypeptide chain elongation. Its function is as follows. Involved in peptide bond synthesis. Stimulates efficient translation and peptide-bond synthesis on native or reconstituted 70S ribosomes in vitro. Probably functions indirectly by altering the affinity of the ribosome for aminoacyl-tRNA, thus increasing their reactivity as acceptors for peptidyl transferase. In Polynucleobacter necessarius subsp. necessarius (strain STIR1), this protein is Elongation factor P.